A 273-amino-acid polypeptide reads, in one-letter code: Translation initiation factor IF-3, mitochondrial (273 aa).

A mitochondrion-targeting transit peptide spans 1–32 (MAALFLKKLTLQTVKTENYCIRRCLGKYILQG). Positions 33–92 (PAPTQQPPRPSCLIHAKAFSTEDTQDEMTKKKKNETAFSSVGRKINERIIHVLDEQGNDL) are cleaved as a propeptide — removed in mature form. The disordered stretch occupies residues 242-273 (EEAAWKAAPDTPRRDALNGGDGKDGASGVLPQ). Basic and acidic residues predominate over residues 252-265 (TPRRDALNGGDGKD).

This sequence belongs to the IF-3 family.

It localises to the mitochondrion. Functionally, IF-3 binds to the 28S ribosomal subunit and shifts the equilibrium between 55S ribosomes and their 39S and 28S subunits in favor of the free subunits, thus enhancing the availability of 28S subunits on which protein synthesis initiation begins. The chain is Translation initiation factor IF-3, mitochondrial (MTIF3) from Bos taurus (Bovine).